A 209-amino-acid chain; its full sequence is Ribosomal RNA large subunit methyltransferase E (209 aa).

Residues Gly63, Trp65, Asp83, Asp99, and Asp124 each coordinate S-adenosyl-L-methionine. Lys164 functions as the Proton acceptor in the catalytic mechanism.

This sequence belongs to the class I-like SAM-binding methyltransferase superfamily. RNA methyltransferase RlmE family.

It is found in the cytoplasm. It carries out the reaction uridine(2552) in 23S rRNA + S-adenosyl-L-methionine = 2'-O-methyluridine(2552) in 23S rRNA + S-adenosyl-L-homocysteine + H(+). Functionally, specifically methylates the uridine in position 2552 of 23S rRNA at the 2'-O position of the ribose in the fully assembled 50S ribosomal subunit. This Shewanella piezotolerans (strain WP3 / JCM 13877) protein is Ribosomal RNA large subunit methyltransferase E.